Here is a 238-residue protein sequence, read N- to C-terminus: DnaA regulatory inactivator Hda (238 aa).

This sequence belongs to the DnaA family. HdA subfamily. As to quaternary structure, the active form seems to be an ADP-bound monomer. Forms the RIDA complex (regulatory inactivation of DnaA) of ATP-DnaA, ADP-Hda and the DNA-loaded beta sliding clamp (dnaN).

Mediates the interaction of DNA replication initiator protein DnaA with DNA polymerase subunit beta sliding clamp (dnaN). Stimulates hydrolysis of ATP-DnaA to ADP-DnaA, rendering DnaA inactive for reinitiation, a process called regulatory inhibition of DnaA or RIDA. The polypeptide is DnaA regulatory inactivator Hda (Pectobacterium atrosepticum (strain SCRI 1043 / ATCC BAA-672) (Erwinia carotovora subsp. atroseptica)).